Here is a 124-residue protein sequence, read N- to C-terminus: Fluoride-specific ion channel FluC (124 aa).

Transmembrane regions (helical) follow at residues 36–56 (VGTMIVNVVGSFLMGVLVVVL), 63–83 (YAPFLMTGMLGGFTTFSAFSL), and 99–119 (AYVGLSVGLSLAGLMAGMAAV). Residues G73 and T76 each coordinate Na(+).

Belongs to the fluoride channel Fluc/FEX (TC 1.A.43) family.

Its subcellular location is the cell inner membrane. It carries out the reaction fluoride(in) = fluoride(out). With respect to regulation, na(+) is not transported, but it plays an essential structural role and its presence is essential for fluoride channel function. Functionally, fluoride-specific ion channel. Important for reducing fluoride concentration in the cell, thus reducing its toxicity. This chain is Fluoride-specific ion channel FluC, found in Cereibacter sphaeroides (strain ATCC 17029 / ATH 2.4.9) (Rhodobacter sphaeroides).